Consider the following 221-residue polypeptide: 2-phospho-L-lactate guanylyltransferase (221 aa).

Belongs to the CofC family. In terms of assembly, homodimer.

The enzyme catalyses (2S)-2-phospholactate + GTP + H(+) = (2S)-lactyl-2-diphospho-5'-guanosine + diphosphate. It participates in cofactor biosynthesis; coenzyme F420 biosynthesis. Its function is as follows. Guanylyltransferase that catalyzes the activation of (2S)-2-phospholactate (2-PL) as (2S)-lactyl-2-diphospho-5'-guanosine, via the condensation of 2-PL with GTP. It is involved in the biosynthesis of coenzyme F420, a hydride carrier cofactor. In Methanothrix thermoacetophila (strain DSM 6194 / JCM 14653 / NBRC 101360 / PT) (Methanosaeta thermophila), this protein is 2-phospho-L-lactate guanylyltransferase.